The primary structure comprises 360 residues: MKSSIVAKLEALYERHEEVQALLGDAATIADQDKFRALSREYAQLSDVARCYTDWRQVQEDIETAQMMLDDPEMREMAQEELRDAKEKGDQLEQQLQVLLLPKDPDDERNAFVEVRAGTGGDEAALFAGDLFRMYSRYAESRRWQVEILSANEGEHGGFKEVIAKFSGDGVYGRLKFESGGHRVQRVPATESQGRIHTSACTVAVMPELPEAEMPDINPADLRIDTFRSSGAGGQHVNTTDSAIRITHLPTGIVVECQDERSQHKNKAKALSVLGARIRAAEVAKRQQAEASTRRNLLGSGDRSDRNRTYNFPQGRVTDHRINLTLYRLDETMEGKLDMLIEPIVQEYQADQLAALSEQE.

At Gln235 the chain carries N5-methylglutamine. A disordered region spans residues 285–313 (KRQQAEASTRRNLLGSGDRSDRNRTYNFP).

Belongs to the prokaryotic/mitochondrial release factor family. Post-translationally, methylated by PrmC. Methylation increases the termination efficiency of RF1.

The protein resides in the cytoplasm. In terms of biological role, peptide chain release factor 1 directs the termination of translation in response to the peptide chain termination codons UAG and UAA. This is Peptide chain release factor 1 from Klebsiella pneumoniae (strain 342).